Here is a 142-residue protein sequence, read N- to C-terminus: Translation initiation factor 2 subunit beta (142 aa).

It belongs to the eIF-2-beta/eIF-5 family. Heterotrimer composed of an alpha, a beta and a gamma chain.

Functionally, eIF-2 functions in the early steps of protein synthesis by forming a ternary complex with GTP and initiator tRNA. This Methanosphaera stadtmanae (strain ATCC 43021 / DSM 3091 / JCM 11832 / MCB-3) protein is Translation initiation factor 2 subunit beta.